The primary structure comprises 277 residues: Collectin-10 (277 aa).

Positions 1 to 27 (MNGFASLLRRNQFILLVLFLLQIQSLG) are cleaved as a signal peptide. The segment at 40 to 107 (ATHTISPGPK…GDKGEKGLLG (68 aa)) is disordered. The span at 49–64 (KGDDGEKGDPGEEGKH) shows a compositional bias: basic and acidic residues. In terms of domain architecture, Collagen-like spans 53–112 (GEKGDPGEEGKHGKVGRMGPKGIKGELGDMGDQGNIGKTGPIGKKGDKGEKGLLGIPGEK). The region spanning 155–271 (TEEKFYYIVQ…CHLTMYFVCE (117 aa)) is the C-type lectin domain. Cystine bridges form between Cys-176-Cys-270 and Cys-248-Cys-262. Residue Asn-258 is glycosylated (N-linked (GlcNAc...) asparagine).

Belongs to the COLEC10/COLEC11 family. Highly expressed in liver, placenta and adrenal gland. Moderately expressed in small intestine, lung, stomach and prostate. Weakly expressed in trachea and spleen.

Its subcellular location is the secreted. The protein localises to the golgi apparatus. The protein resides in the cytoplasm. Lectin that binds to various sugars: galactose &gt; mannose = fucose &gt; N-acetylglucosamine &gt; N-acetylgalactosamine. Acts as a chemoattractant, probably involved in the regulation of cell migration. The chain is Collectin-10 (COLEC10) from Homo sapiens (Human).